Consider the following 101-residue polypeptide: MSDLEAKPSTEHLGDKIKDEDIKLRVIGQDSSEIHFKVKMTTPLKKLKKSYCQRQGVPVNSLRFLFEGQRIADNHTPEELGMEEEDVIEVYQEQIGGHSTV.

The short motif at 17–21 (IKDED) is the Required for PML-NB formation element. Residue Lys-18 forms a Glycyl lysine isopeptide (Lys-Gly) (interchain with G-Cter in SUMO1P1/SUMO5) linkage. Positions 20 to 97 (EDIKLRVIGQ…IEVYQEQIGG (78 aa)) constitute a Ubiquitin-like domain. Residue Gly-97 forms a Glycyl lysine isopeptide (Gly-Lys) (interchain with K-? in acceptor proteins) linkage. A propeptide spanning residues 98-101 (HSTV) is cleaved from the precursor.

Belongs to the ubiquitin family. SUMO subfamily. Interacts with CBX4. Interacts with PIAS1. Found in a complex with SAE2. Interacts with UBE2I. Interacts with SP100. Interacts with HIPK2. Interacts with DAXX. Interacts with PML-RARA oncoprotein; PML-RARalpha outcompetes PML for SUMO1P1/SUMO5 conjugation. Cleavage of precursor form is necessary for function. Post-translationally, autosumoylated at Lys-18. In terms of tissue distribution, high expression levels in testes and peripheral blood leukocyte. Expressed also in lung, placenta, liver, spleen and thymus.

It localises to the nucleus. Ubiquitin-like protein that can be covalently attached to proteins as a monomer or as a lysine-linked polymer. Regulates the life cycle of promyelocytic leukemia nuclear bodies (PML-NBs). PolySUMO1P1/SUMO5 conjugation on 'Lys-160' of PML facilitates recruitment of PML-NB components, which enlarges PML-NB. SUMO1P1/SUMO5 also increases polySUMO2/3 conjugation of PML, resulting in RNF4-mediated disruption of PML-NBs. The chain is Small ubiquitin-related modifier 5 from Homo sapiens (Human).